We begin with the raw amino-acid sequence, 589 residues long: PTS system mannitol-specific EIICB component (589 aa).

The Cytoplasmic portion of the chain corresponds to 1 to 25 (MEEKVSLKVRVQKLGTSLSNMVMPN). In terms of domain architecture, PTS EIIC type-2 spans 14–347 (LGTSLSNMVM…LHADKSTEDS (334 aa)). Residues 26–47 (IGAFIAWGVLTALFIADGYLPN) traverse the membrane as a helical segment. Over 48–51 (EQLA) the chain is Extracellular. The chain crosses the membrane as a helical span at residues 52-72 (TVVGPMLTYLLPILIGYTGGY). The Cytoplasmic segment spans residues 73-135 (MIHGQRGAVV…PGFEMLVNNF (63 aa)). A helical membrane pass occupies residues 136-157 (SAGLVGFALLLLAFYAIGPVVS). The Extracellular portion of the chain corresponds to 158–166 (TLTGAVGNG). Residues 167–187 (VEAIVNARLLPMANIIIEPAK) form a helical membrane-spanning segment. Over 188 to 274 (VLFLNNALNH…VMMKPTLFLA (87 aa)) the chain is Cytoplasmic. A helical transmembrane segment spans residues 275–294 (AMAGGISGTFTFQLLDAGLK). Residues 295-316 (SPASPGSIIAIIATAPKGVWPH) are Extracellular-facing. The helical transmembrane segment at 317–338 (LNVLLGVLVAAVVSFLVAALIL) threads the bilayer. Topologically, residues 339-589 (HADKSTEDSL…YDKMAARMYK (251 aa)) are cytoplasmic. The 96-residue stretch at 381–476 (EKIIFACDAG…SLTGASPIAE (96 aa)) folds into the PTS EIIB type-2 domain. Cysteine 387 functions as the Phosphocysteine intermediate; for EIIB activity in the catalytic mechanism. At cysteine 387 the chain carries Phosphocysteine; by EIIA.

In terms of assembly, homodimer.

The protein resides in the cell membrane. The catalysed reaction is D-mannitol(out) + N(pros)-phospho-L-histidyl-[protein] = D-mannitol 1-phosphate(in) + L-histidyl-[protein]. Functionally, the phosphoenolpyruvate-dependent sugar phosphotransferase system (sugar PTS), a major carbohydrate active transport system, catalyzes the phosphorylation of incoming sugar substrates concomitantly with their translocation across the cell membrane. The enzyme II CmtAB PTS system is involved in D-mannitol transport. This is PTS system mannitol-specific EIICB component (mtlA) from Streptococcus pneumoniae serotype 4 (strain ATCC BAA-334 / TIGR4).